A 620-amino-acid polypeptide reads, in one-letter code: Protein NRT1/ PTR FAMILY 2.13 (620 aa).

A disordered region spans residues 1 to 32 (MVLEDRKDGSSLPGRSGSFSKSSPSELDVVDP). The span at 10 to 25 (SSLPGRSGSFSKSSPS) shows a compositional bias: low complexity. The next 12 helical transmembrane spans lie at 70-90 (LGSIGLLANFMVYLTKVFHLE), 95-115 (ANVINIWSGFTNLTPLVGAYI), 126-146 (IAFASFATLLGLITITLTASF), 167-187 (KLQIGVLLLGLCFLSVGSGGI), 213-233 (FFNWYYMTFTVVLIITQTVVV), 241-261 (WIIGFSIPTGLMALAVVMFFA), 364-384 (IVPIWSAGIISLAAMTTQGTF), 402-422 (IPAGSLSVISLLTIGIFLPFY), 443-463 (LQRIGTGIVFAIFSMIVAGIV), 485-505 (VFWLSPQLILMGLCEAFNIIG), 524-544 (SLFSLSFAGSSYLSSFLVTVV), and 568-588 (YFYYLIAVLGVVNLVYFWYCA).

This sequence belongs to the major facilitator superfamily. Proton-dependent oligopeptide transporter (POT/PTR) (TC 2.A.17) family. As to quaternary structure, interacts with NLA. Post-translationally, ubiquitinated by NLA. Ubiquitination of NPF2.13 leads to its degradation by the proteasome. As to expression, expressed in leaves and flowers. Detected in stems and siliques. Highest expression in the distal lamina of older leaves. Restricted to the sieve element and companion cell complex of the minor vein.

The protein resides in the cell membrane. Functionally, low-affinity proton-dependent nitrate transporter. Not involved in dipeptides transport, but has a weak glucosinolate transport activity. Involved in phloem loading and nitrate remobilization from the older leaves to other tissues. This Arabidopsis thaliana (Mouse-ear cress) protein is Protein NRT1/ PTR FAMILY 2.13 (NPF2.13).